A 490-amino-acid polypeptide reads, in one-letter code: Glutamyl-tRNA(Gln) amidotransferase subunit A (490 aa).

Residues Lys78 and Ser153 each act as charge relay system in the active site. Catalysis depends on Ser177, which acts as the Acyl-ester intermediate.

It belongs to the amidase family. GatA subfamily. Heterotrimer of A, B and C subunits.

The catalysed reaction is L-glutamyl-tRNA(Gln) + L-glutamine + ATP + H2O = L-glutaminyl-tRNA(Gln) + L-glutamate + ADP + phosphate + H(+). In terms of biological role, allows the formation of correctly charged Gln-tRNA(Gln) through the transamidation of misacylated Glu-tRNA(Gln) in organisms which lack glutaminyl-tRNA synthetase. The reaction takes place in the presence of glutamine and ATP through an activated gamma-phospho-Glu-tRNA(Gln). This Bdellovibrio bacteriovorus (strain ATCC 15356 / DSM 50701 / NCIMB 9529 / HD100) protein is Glutamyl-tRNA(Gln) amidotransferase subunit A.